Consider the following 347-residue polypeptide: GTPase Obg (347 aa).

Positions 1-158 constitute an Obg domain; the sequence is MFIDNVKLVL…LSVRLELKLI (158 aa). The region spanning 159 to 339 is the OBG-type G domain; the sequence is ADVGLVGFPN…LKFMLLEEVK (181 aa). GTP contacts are provided by residues 165 to 172, 190 to 194, 212 to 215, 280 to 283, and 320 to 322; these read GFPNVGKS, FTTLT, DIPG, SKSD, and SSL. Residues Ser-172 and Thr-192 each coordinate Mg(2+).

It belongs to the TRAFAC class OBG-HflX-like GTPase superfamily. OBG GTPase family. In terms of assembly, monomer. It depends on Mg(2+) as a cofactor.

It localises to the cytoplasm. In terms of biological role, an essential GTPase which binds GTP, GDP and possibly (p)ppGpp with moderate affinity, with high nucleotide exchange rates and a fairly low GTP hydrolysis rate. Plays a role in control of the cell cycle, stress response, ribosome biogenesis and in those bacteria that undergo differentiation, in morphogenesis control. This chain is GTPase Obg, found in Campylobacter lari (strain RM2100 / D67 / ATCC BAA-1060).